The primary structure comprises 286 residues: Non-homologous end joining protein Ku (286 aa).

Residues 10–175 (TVGLVSFPVR…EEVREPDFVV (166 aa)) enclose the Ku domain. Basic and acidic residues predominate over residues 226–242 (ERQERQRREAGEVRQAD). A disordered region spans residues 226–270 (ERQERQRREAGEVRQADETDEAAETEVPEVDIPASRAPGETGGEL). Residues 243–254 (ETDEAAETEVPE) show a composition bias toward acidic residues.

Belongs to the prokaryotic Ku family. In terms of assembly, homodimer. Interacts with LigD.

With LigD forms a non-homologous end joining (NHEJ) DNA repair enzyme, which repairs dsDNA breaks with reduced fidelity. Binds linear dsDNA with 5'- and 3'- overhangs but not closed circular dsDNA nor ssDNA. Recruits and stimulates the ligase activity of LigD. This Actinosynnema mirum (strain ATCC 29888 / DSM 43827 / JCM 3225 / NBRC 14064 / NCIMB 13271 / NRRL B-12336 / IMRU 3971 / 101) protein is Non-homologous end joining protein Ku.